Reading from the N-terminus, the 478-residue chain is Ninja-family protein 8 (478 aa).

3 disordered regions span residues 1–247, 337–374, and 454–478; these read MDDD…LTPG, FTAK…EKKA, and DAPA…SAEN. Over residues 23–35 the composition is skewed to basic and acidic residues; it reads KARDAPLEPKAEP. Over residues 169-179 the composition is skewed to polar residues; the sequence is ISISTDDGSTG. The segment covering 180-189 has biased composition (acidic residues); the sequence is ENEDVAESEA. A compositionally biased stretch (low complexity) spans 233–242; the sequence is SFSGSESSSG. The span at 339 to 358 shows a compositional bias: basic and acidic residues; it reads AKDKADQTGTKQVDDGKKPQ.

It belongs to the Ninja family.

The protein localises to the nucleus. The polypeptide is Ninja-family protein 8 (Zea mays (Maize)).